The following is a 389-amino-acid chain: Protein OSCP1 (389 aa).

As to expression, expressed predominantly in testis, also found in placenta and to a lesser extent in thymus and small intestine; abundantly expressed in tumor-derived cell lines. Ubiquitously expressed.

It is found in the basal cell membrane. Functionally, may be involved in drug clearance in the placenta. The chain is Protein OSCP1 (OSCP1) from Homo sapiens (Human).